The primary structure comprises 189 residues: Probable transcriptional regulator Rv1176c (189 aa).

It belongs to the PadR family. In terms of assembly, homodimer.

It is found in the cytoplasm. In terms of biological role, probable transcriptional regulator that may help mitigate the effect of oxidative stress and help mycobacteria survive inside macrophages. Binds to its own promoter region. This Mycobacterium tuberculosis (strain ATCC 25618 / H37Rv) protein is Probable transcriptional regulator Rv1176c.